The sequence spans 163 residues: uncharacterized protein (163 aa).

Belongs to the IMPDH/GMPR family.

This is an uncharacterized protein from Haemophilus influenzae (strain ATCC 51907 / DSM 11121 / KW20 / Rd).